Reading from the N-terminus, the 423-residue chain is Kynureninase (423 aa).

Pyridoxal 5'-phosphate is bound by residues L105, S106, 133 to 136 (FPSD), D218, H221, and Y243. The residue at position 244 (K244) is an N6-(pyridoxal phosphate)lysine. 2 residues coordinate pyridoxal 5'-phosphate: W273 and N301.

The protein belongs to the kynureninase family. As to quaternary structure, homodimer. Pyridoxal 5'-phosphate serves as cofactor.

It carries out the reaction L-kynurenine + H2O = anthranilate + L-alanine + H(+). The enzyme catalyses 3-hydroxy-L-kynurenine + H2O = 3-hydroxyanthranilate + L-alanine + H(+). It participates in amino-acid degradation; L-kynurenine degradation; L-alanine and anthranilate from L-kynurenine: step 1/1. It functions in the pathway cofactor biosynthesis; NAD(+) biosynthesis; quinolinate from L-kynurenine: step 2/3. Its function is as follows. Catalyzes the cleavage of L-kynurenine (L-Kyn) and L-3-hydroxykynurenine (L-3OHKyn) into anthranilic acid (AA) and 3-hydroxyanthranilic acid (3-OHAA), respectively. The chain is Kynureninase from Xanthomonas axonopodis pv. citri (strain 306).